A 121-amino-acid polypeptide reads, in one-letter code: Large ribosomal subunit protein uL18 (121 aa).

This sequence belongs to the universal ribosomal protein uL18 family. In terms of assembly, part of the 50S ribosomal subunit; part of the 5S rRNA/L5/L18/L25 subcomplex. Contacts the 5S and 23S rRNAs.

Functionally, this is one of the proteins that bind and probably mediate the attachment of the 5S RNA into the large ribosomal subunit, where it forms part of the central protuberance. The polypeptide is Large ribosomal subunit protein uL18 (Burkholderia ambifaria (strain MC40-6)).